The chain runs to 116 residues: Non-specific lipid-transfer protein C, cotyledon-specific isoform (116 aa).

The signal sequence occupies residues 1–24 (MKNVVFSVLLLLSFLFCLANTNEA). Intrachain disulfides connect C28/C76, C38/C53, C54/C98, and C74/C112.

The protein belongs to the plant LTP family.

In terms of biological role, plant non-specific lipid-transfer proteins transfer phospholipids as well as galactolipids across membranes. May play a role in wax or cutin deposition in the cell walls of expanding epidermal cells and certain secretory tissues. In Ricinus communis (Castor bean), this protein is Non-specific lipid-transfer protein C, cotyledon-specific isoform.